An 841-amino-acid chain; its full sequence is Axin-1 (841 aa).

Residues 1–78 are disordered; it reads MNIQGKGFPL…GYEPEGSASP (78 aa). Over residues 44-61 the composition is skewed to polar residues; sequence FYSSKSDAVRNETSTATP. An RGS domain is found at 88-211; the sequence is SLHSLLDDQD…LKSDIYLEYT (124 aa). The disordered stretch occupies residues 217-269; sequence SPKIYSDPSSGSGTGKGLPGYLPTLNEDEEWKCDQDTEPEASRDSAPSSRLTQ. Over residues 248 to 259 the composition is skewed to basic and acidic residues; it reads KCDQDTEPEASR. The interaction with GSK3B stretch occupies residues 348–433; the sequence is LRKQHRREMQ…DADISSGPSV (86 aa). The interaction with beta-catenin stretch occupies residues 434 to 508; it reads ISHKMPSAQP…RSPESGHLGK (75 aa). Disordered regions lie at residues 482–527, 613–635, and 727–756; these read KTPG…TTKS, NIKK…SPED, and RRLE…SGAS. Over residues 727–736 the composition is skewed to basic and acidic residues; the sequence is RRLEEEEKRA. The 83-residue stretch at 759 to 841 folds into the DIX domain; sequence CENIVVAYYF…KIIGKVEKID (83 aa).

Homodimer. ADP-ribosylated by tankyrase TNKS and TNKS2. Poly-ADP-ribosylated protein is recognized by RNF146, followed by ubiquitination at 'Lys-48' and subsequent activation of the Wnt signaling pathway. Post-translationally, ubiquitinated by RNF146 when poly-ADP-ribosylated, leading to its degradation and subsequent activation of the Wnt signaling pathway.

It is found in the cytoplasm. Its subcellular location is the nucleus. The protein resides in the membrane. It localises to the cell membrane. In terms of biological role, component of the beta-catenin destruction complex required for regulating CTNNB1 levels through phosphorylation and ubiquitination, and modulating Wnt-signaling. Controls dorsoventral patterning via two opposing effects; down-regulates CTNNB1 to inhibit the Wnt signaling pathway and ventralize embryos, but also dorsalizes embryos by activating a Wnt-independent JNK signaling pathway. This Gallus gallus (Chicken) protein is Axin-1 (AXIN1).